Reading from the N-terminus, the 417-residue chain is MRFAWTVLLLGPLQLCALVHCAPPAAGQQQPPREPPAAPGAWRQQIQWENNGQVFSLLSLGSQYQPQRRRDPGAAVPGAANASAQQPRTPILLIRDNRTAAARTRTAGSSGVTAGRPRPTARHWFQAGYSTSRAREAGASRAENQTAPGEVPALSNLRPPSRVDGMVGDDPYNPYKYSDDNPYYNYYDTYERPRPGGRYRPGYGTGYFQYGLPDLVADPYYIQASTYVQKMSMYNLRCAAEENCLASTAYRADVRDYDHRVLLRFPQRVKNQGTSDFLPSRPRYSWEWHSCHQHYHSMDEFSHYDLLDANTQRRVAEGHKASFCLEDTSCDYGYHRRFACTAHTQGLSPGCYDTYGADIDCQWIDITDVKPGNYILKVSVNPSYLVPESDYTNNVVRCDIRYTGHHAYASGCTISPY.

The first 21 residues, 1 to 21 (MRFAWTVLLLGPLQLCALVHC), serve as a signal peptide directing secretion. Positions 22 to 168 (APPAAGQQQP…PPSRVDGMVG (147 aa)) are cleaved as a propeptide — removed by BMP1. The segment at 64–89 (YQPQRRRDPGAAVPGAANASAQQPRT) is disordered. Positions 73-84 (GAAVPGAANASA) are enriched in low complexity. 3 N-linked (GlcNAc...) asparagine glycosylation sites follow: asparagine 81, asparagine 97, and asparagine 144. Positions 137-174 (AGASRAENQTAPGEVPALSNLRPPSRVDGMVGDDPYNP) are disordered. Residue tyrosine 187 is modified to Sulfotyrosine. A lysyl-oxidase like region spans residues 213-417 (PDLVADPYYI…YASGCTISPY (205 aa)). 5 cysteine pairs are disulfide-bonded: cysteine 238-cysteine 244, cysteine 291-cysteine 340, cysteine 324-cysteine 330, cysteine 351-cysteine 361, and cysteine 398-cysteine 412. 3 residues coordinate Cu cation: histidine 292, histidine 294, and histidine 296. The segment at residues 320 to 355 (KASFCLEDTSCDYGYHRRFACTAHTQGLSPGCYDTY) is a cross-link (lysine tyrosylquinone (Lys-Tyr)). Tyrosine 355 is modified (2',4',5'-topaquinone).

This sequence belongs to the lysyl oxidase family. Interacts with MFAP4. Interacts (via propeptide) with EFEMP2; this interaction is strong and facilitates formation of ternary complexes with ELN during elastic fiber assembly; this interaction limits interaction of EFEMP2 with FBLN5. It depends on Cu cation as a cofactor. Lysine tyrosylquinone residue is required as a cofactor. The lysine tyrosylquinone cross-link (LTQ) is generated by condensation of the epsilon-amino group of a lysine with a topaquinone produced by oxidation of tyrosine. Post-translationally, proteolytically cleaved by BMP1 which removes the propeptide. Also proteolytically cleaved by ADAMTS2 and ADAMTS14, but not by ADAMTS3, at an additional cleavage site downstream of the BMP1 cleavage site. The propeptide plays a role in directing the deposition of this enzyme to elastic fibers, via interaction with tropoelastin. Cleavage by BMP1 to remove the propeptide does not increase enzymatic activity but increases binding to collagen. Cleavage by ADAMTS2 produces a form with reduced collagen-binding activity. In terms of processing, sulfated at Tyr-187 and also at either Tyr-183 or Tyr-184 which enhances binding to collagen. Heart, placenta, skeletal muscle, kidney, lung and pancreas.

The protein localises to the secreted. It is found in the extracellular space. The enzyme catalyses L-lysyl-[protein] + O2 + H2O = (S)-2-amino-6-oxohexanoyl-[protein] + H2O2 + NH4(+). Responsible for the post-translational oxidative deamination of peptidyl lysine residues in precursors to fibrous collagen and elastin. Regulator of Ras expression. May play a role in tumor suppression. Plays a role in the aortic wall architecture. The chain is Protein-lysine 6-oxidase (LOX) from Homo sapiens (Human).